Reading from the N-terminus, the 304-residue chain is Ribonuclease Z (304 aa).

Positions 64, 66, 68, 69, 141, 209, and 267 each coordinate Zn(2+). Aspartate 68 acts as the Proton acceptor in catalysis.

The protein belongs to the RNase Z family. Homodimer. Zn(2+) serves as cofactor.

It carries out the reaction Endonucleolytic cleavage of RNA, removing extra 3' nucleotides from tRNA precursor, generating 3' termini of tRNAs. A 3'-hydroxy group is left at the tRNA terminus and a 5'-phosphoryl group is left at the trailer molecule.. Its function is as follows. Zinc phosphodiesterase, which displays some tRNA 3'-processing endonuclease activity. Probably involved in tRNA maturation, by removing a 3'-trailer from precursor tRNA. This Thermoplasma volcanium (strain ATCC 51530 / DSM 4299 / JCM 9571 / NBRC 15438 / GSS1) protein is Ribonuclease Z.